The primary structure comprises 159 residues: MAEQVVEILVTGGKATAGPPLGPAIGPLGVNIMQVVQMINTKTKDYEGMSVPVKVIVETTKRTFEVEVGIPPASALIKKELGLESGSQEPKHKVAGNITMEKIVKIAKMKQDAMLAYTLKSAAKEVIGTCVSVGVNVEGKTPKEAQKAVDAGEFDSYFN.

The protein belongs to the universal ribosomal protein uL11 family. In terms of assembly, part of the ribosomal stalk of the 50S ribosomal subunit. Interacts with L10 and the large rRNA to form the base of the stalk. L10 forms an elongated spine to which L12 dimers bind in a sequential fashion forming a multimeric L10(L12)X complex.

In terms of biological role, forms part of the ribosomal stalk which helps the ribosome interact with GTP-bound translation factors. In Methanococcus vannielii (strain ATCC 35089 / DSM 1224 / JCM 13029 / OCM 148 / SB), this protein is Large ribosomal subunit protein uL11.